Reading from the N-terminus, the 1609-residue chain is Chitin synthase 5 (1609 aa).

3 disordered regions span residues 1–188 (MNPF…DRER), 248–280 (SGLGVTGPTNVPPGGLGRAPPLRRGKSLLGRDE), and 294–320 (VSLRRKQSKSGNKPSKEVPRDLGESKT). Residues 1-326 (MNPFESLPDA…ESKTSRIAPG (326 aa)) are Cytoplasmic-facing. Residues 34-44 (PGSTGRPQNPI) are compositionally biased toward polar residues. The span at 61-82 (PQQQQQQQQQQQQQQQRSQQPF) shows a compositional bias: low complexity. The segment covering 100–111 (AYLNSTSSQPTQ) has biased composition (polar residues). The segment covering 134 to 146 (DSVKSYGDDKRSI) has biased composition (basic and acidic residues). A compositionally biased stretch (polar residues) spans 147–163 (NDPNSSSTALTQVNSLD). The span at 253-267 (TGPTNVPPGGLGRAP) shows a compositional bias: low complexity. Over residues 307 to 320 (PSKEVPRDLGESKT) the composition is skewed to basic and acidic residues. Residues 327–347 (PVGGWMIYCYILTICCPGPFL) traverse the membrane as a helical segment. Topologically, residues 348 to 364 (RIFGIRTPEQQRAWREK) are extracellular. Residues 365-385 (MGLIGIITLIMAAVGFLTFGF) traverse the membrane as a helical segment. Topologically, residues 386 to 624 (TQTVCGQQPD…ASKVELYLSL (239 aa)) are cytoplasmic. A helical membrane pass occupies residues 625–645 (VFIIGVVAIKFFMAVMFGWFI). Residues 646–1176 (SWRLGNYANE…MRFVVFMELT (531 aa)) are Extracellular-facing. N-linked (GlcNAc...) asparagine glycosylation occurs at N654. A disordered region spans residues 729–767 (GVASPLGGSPPGSPSVAGGRSSASLAPAHSRRSSFSGSP). The span at 742-752 (PSVAGGRSSAS) shows a compositional bias: low complexity. Residues N1015 and N1144 are each glycosylated (N-linked (GlcNAc...) asparagine). The chain crosses the membrane as a helical span at residues 1177 to 1197 (GTLVLPAAIAFTLYVVVQAFL). Over 1198-1202 (PNVPT) the chain is Cytoplasmic. A helical membrane pass occupies residues 1203–1223 (PTIPLILLALILGLPGILIVV). Over 1224–1227 (TSRK) the chain is Extracellular. The helical transmembrane segment at 1228-1248 (IAYVGWMLIYLLSLPIWNFVL) threads the bilayer. Residues 1249–1609 (PLYAYWHMDD…PPGAAPPSFD (361 aa)) are Cytoplasmic-facing. 2 disordered regions span residues 1354–1381 (PNAMSSSSASQFGPDVSEVSHSKSPSGA) and 1399–1609 (TDAK…PSFD). 2 stretches are compositionally biased toward polar residues: residues 1502–1514 (NVSTEQRYPTVSE) and 1530–1552 (GSASPTPAQQGFNAANSNQQTRP). The segment covering 1568 to 1588 (AQGVRQVQRGARRSQMPNSAA) has biased composition (low complexity).

The protein belongs to the chitin synthase family. Class IV subfamily.

The protein resides in the cell membrane. The protein localises to the cytoplasmic vesicle membrane. The catalysed reaction is [(1-&gt;4)-N-acetyl-beta-D-glucosaminyl](n) + UDP-N-acetyl-alpha-D-glucosamine = [(1-&gt;4)-N-acetyl-beta-D-glucosaminyl](n+1) + UDP + H(+). In terms of biological role, polymerizes chitin, a structural polymer of the cell wall and septum, by transferring the sugar moiety of UDP-GlcNAc to the non-reducing end of the growing chitin polymer. In Mycosarcoma maydis (Corn smut fungus), this protein is Chitin synthase 5.